Reading from the N-terminus, the 756-residue chain is 5-methyltetrahydropteroyltriglutamate--homocysteine methyltransferase (756 aa).

Residues 16 to 19 and Lys-112 each bind 5-methyltetrahydropteroyltri-L-glutamate; that span reads RELK. L-homocysteine contacts are provided by residues 432 to 434 and Glu-485; that span reads IGS. Residues 432-434 and Glu-485 contribute to the L-methionine site; that span reads IGS. Residues 516 to 517 and Trp-562 contribute to the 5-methyltetrahydropteroyltri-L-glutamate site; that span reads RC. Residue Asp-600 coordinates L-homocysteine. Residue Asp-600 coordinates L-methionine. Residue Glu-606 participates in 5-methyltetrahydropteroyltri-L-glutamate binding. 3 residues coordinate Zn(2+): His-642, Cys-644, and Glu-666. The active-site Proton donor is His-695. Cys-727 serves as a coordination point for Zn(2+).

Belongs to the vitamin-B12 independent methionine synthase family. Zn(2+) is required as a cofactor.

The enzyme catalyses 5-methyltetrahydropteroyltri-L-glutamate + L-homocysteine = tetrahydropteroyltri-L-glutamate + L-methionine. It functions in the pathway amino-acid biosynthesis; L-methionine biosynthesis via de novo pathway; L-methionine from L-homocysteine (MetE route): step 1/1. Functionally, catalyzes the transfer of a methyl group from 5-methyltetrahydrofolate to homocysteine resulting in methionine formation. The protein is 5-methyltetrahydropteroyltriglutamate--homocysteine methyltransferase of Haemophilus influenzae (strain ATCC 51907 / DSM 11121 / KW20 / Rd).